The primary structure comprises 216 residues: PEP-dependent dihydroxyacetone kinase 2, ADP-binding subunit DhaL (216 aa).

A DhaL domain is found at 9 to 210; the sequence is AFFGHVLQDM…SWMLMNVILE (202 aa). Residues Asp33, Asp38, and Asp40 each contribute to the Mg(2+) site. ADP contacts are provided by residues 41–44, 84–85, Gly126, Met135, Arg182, and 195–197; these read HGIN, AS, and DPG.

As to quaternary structure, homodimer. The dihydroxyacetone kinase complex is composed of a homodimer of DhaM, a homodimer of DhaK and the subunit DhaL. Requires Mg(2+) as cofactor.

The protein localises to the cytoplasm. It carries out the reaction dihydroxyacetone + phosphoenolpyruvate = dihydroxyacetone phosphate + pyruvate. It participates in polyol metabolism; glycerol degradation. In terms of biological role, ADP-binding subunit of the dihydroxyacetone kinase, which is responsible for the phosphoenolpyruvate (PEP)-dependent phosphorylation of dihydroxyacetone. DhaL-ADP is converted to DhaL-ATP via a phosphoryl group transfer from DhaM and transmits it to dihydroxyacetone binds to DhaK. This chain is PEP-dependent dihydroxyacetone kinase 2, ADP-binding subunit DhaL, found in Listeria innocua serovar 6a (strain ATCC BAA-680 / CLIP 11262).